The sequence spans 138 residues: Small ribosomal subunit protein uS11c (138 aa).

A disordered region spans residues 1–22 (MTKPIPRIGSRRNGRIGSRKNA). Basic residues predominate over residues 9–22 (GSRRNGRIGSRKNA).

Belongs to the universal ribosomal protein uS11 family. In terms of assembly, part of the 30S ribosomal subunit.

The protein localises to the plastid. The protein resides in the chloroplast. In Dioscorea elephantipes (Elephant's foot yam), this protein is Small ribosomal subunit protein uS11c.